We begin with the raw amino-acid sequence, 264 residues long: Indole-3-glycerol phosphate synthase (264 aa).

This sequence belongs to the TrpC family.

The catalysed reaction is 1-(2-carboxyphenylamino)-1-deoxy-D-ribulose 5-phosphate + H(+) = (1S,2R)-1-C-(indol-3-yl)glycerol 3-phosphate + CO2 + H2O. It participates in amino-acid biosynthesis; L-tryptophan biosynthesis; L-tryptophan from chorismate: step 4/5. The sequence is that of Indole-3-glycerol phosphate synthase from Xylella fastidiosa (strain M12).